Consider the following 473-residue polypeptide: Glycine receptor subunit beta-type 4 (473 aa).

The first 19 residues, 1–19 (MHSLFLKILIYSLMQCVLG), serve as a signal peptide directing secretion. Residues 20 to 249 (QAEFWDYDEN…EFHVDREITH (230 aa)) are Extracellular-facing. 3 N-linked (GlcNAc...) asparagine glycosylation sites follow: asparagine 29, asparagine 105, and asparagine 151. The cysteines at positions 166 and 180 are disulfide-linked. A helical transmembrane segment spans residues 250–271 (HIIQSYIPTSLIVIISWFSFWL). Residues 272 to 276 (DVEAV) lie on the Cytoplasmic side of the membrane. Residues 277–297 (PGRVSLSITTLLTLATQSSAA) form a helical membrane-spanning segment. The Extracellular segment spans residues 298–308 (RMALPQASDVK). Residues 309 to 329 (AIDVWMGTCMAFVFSAMIEFT) form a helical membrane-spanning segment. Topologically, residues 330–439 (VVNYCVRRKV…NRKNAQKIDR (110 aa)) are cytoplasmic. The helical transmembrane segment at 440 to 460 (YSRALFPLAFIIFNIFYWIYY) threads the bilayer. Topologically, residues 461 to 473 (LKYAGSNSPELLL) are extracellular.

The protein belongs to the ligand-gated ion channel (TC 1.A.9) family. Glycine receptor (TC 1.A.9.3) subfamily. Pentamer.

It is found in the postsynaptic cell membrane. It localises to the synapse. The protein localises to the cell membrane. In terms of biological role, glycine receptors are ligand-gated chloride channels. Channel opening is triggered by extracellular glycine. Contributes to the generation of inhibitory postsynaptic currents. In Caenorhabditis elegans, this protein is Glycine receptor subunit beta-type 4.